The chain runs to 59 residues: Cuticle protein 7 isoform b (59 aa).

At Q1 the chain carries Pyrrolidone carboxylic acid.

The polypeptide is Cuticle protein 7 isoform b (Limulus polyphemus (Atlantic horseshoe crab)).